Consider the following 694-residue polypeptide: Pentatricopeptide repeat-containing protein At3g12770 (694 aa).

PPR repeat units follow at residues 52–82 (SGFLITKLIHASSSFGDITFARQVFDDLPRP), 83–117 (QIFPWNAIIRGYSRNNHFQDALLMYSNMQLARVSP), 118–152 (DSFTFPHLLKACSGLSHLQMGRFVHAQVFRLGFDA), 153–183 (DVFVQNGLIALYAKCRRLGSARTVFEGLPLP), 186–220 (TIVSWTAIVSAYAQNGEPMEALEIFSQMRKMDVKP), 221–255 (DWVALVSVLNAFTCLQDLKQGRSIHASVVKMGLEI), 256–286 (EPDLLISLNTMYAKCGQVATAKILFDKMKSP), 287–321 (NLILWNAMISGYAKNGYAREAIDMFHEMINKDVRP), 322–356 (DTISITSAISACAQVGSLEQARSMYEYVGRSDYRD), 357–387 (DVFISSALIDMFAKCGSVEGARLVFDRTLDR), 388–422 (DVVVWSAMIVGYGLHGRAREAISLYRAMERGGVHP), 423–457 (NDVTFLGLLMACNHSGMVREGWWFFNRMADHKINP), and 458–488 (QQQHYACVIDLLGRAGHLDQAYEVIKCMPVQ). Positions 493–568 (VWGALLSACK…DVGCSWVEVR (76 aa)) are type E motif. Positions 569–599 (GRLEAFRVGDKSHPRYEEIERQVEWIESRLK) are type E(+) motif. The type DYW motif stretch occupies residues 600 to 694 (EGGFVANKDA…DGVCSCGDYW (95 aa)).

The protein belongs to the PPR family. PCMP-H subfamily.

The polypeptide is Pentatricopeptide repeat-containing protein At3g12770 (PCMP-H43) (Arabidopsis thaliana (Mouse-ear cress)).